The chain runs to 257 residues: Protein KlaA (257 aa).

Its function is as follows. Belongs to the kla operon, which is associated with cryptic tellurite resistance, and IncW plasmid fertility inhibition. The chain is Protein KlaA (klaA) from Escherichia coli.